The chain runs to 668 residues: DNA ligase (668 aa).

NAD(+)-binding positions include 31–35 (DYDFD), 80–81 (SL), and Glu111. Lys113 functions as the N6-AMP-lysine intermediate in the catalytic mechanism. NAD(+) contacts are provided by Arg134, Glu170, Lys285, and Lys309. Zn(2+) is bound by residues Cys403, Cys406, Cys421, and Cys427. The BRCT domain maps to 587–668 (NATEKFIGKT…EFITKLNESE (82 aa)).

It belongs to the NAD-dependent DNA ligase family. LigA subfamily. Mg(2+) is required as a cofactor. Requires Mn(2+) as cofactor.

The enzyme catalyses NAD(+) + (deoxyribonucleotide)n-3'-hydroxyl + 5'-phospho-(deoxyribonucleotide)m = (deoxyribonucleotide)n+m + AMP + beta-nicotinamide D-nucleotide.. DNA ligase that catalyzes the formation of phosphodiester linkages between 5'-phosphoryl and 3'-hydroxyl groups in double-stranded DNA using NAD as a coenzyme and as the energy source for the reaction. It is essential for DNA replication and repair of damaged DNA. This Flavobacterium johnsoniae (strain ATCC 17061 / DSM 2064 / JCM 8514 / BCRC 14874 / CCUG 350202 / NBRC 14942 / NCIMB 11054 / UW101) (Cytophaga johnsonae) protein is DNA ligase.